Consider the following 106-residue polypeptide: MFNFSVSNPINPFSTSSSYLYALYSPLLNKSLNSIFNTFSTNSWDVTHCSTICLMKRVSSSDFPLILYMGFRLYLASIVYLSDSAINILSTCVPIILHLLDLHSLL.

This is an uncharacterized protein from Homo sapiens (Human).